Here is a 482-residue protein sequence, read N- to C-terminus: Carbamoyl phosphate synthase large chain, N-terminal section (482 aa).

Positions 1–398 are carboxyphosphate synthetic domain; sequence MESIKKVMVF…ALQKAIRSLD (398 aa). The ATP site is built by arginine 126, arginine 166, glycine 172, glycine 173, glutamate 205, valine 207, glutamate 212, glycine 238, isoleucine 239, histidine 240, glutamine 281, and glutamate 295. The 195-residue stretch at 130 to 324 folds into the ATP-grasp domain; the sequence is AEAMAEINEP…IARIAAKIAI (195 aa). Positions 281, 295, and 297 each coordinate Mg(2+). Positions 281, 295, and 297 each coordinate Mn(2+).

The protein belongs to the CarB family. Composed of two chains; the small (or glutamine) chain promotes the hydrolysis of glutamine to ammonia, which is used by the large (or ammonia) chain to synthesize carbamoyl phosphate. Tetramer of heterodimers (alpha,beta)4. Mg(2+) serves as cofactor. It depends on Mn(2+) as a cofactor.

The catalysed reaction is hydrogencarbonate + L-glutamine + 2 ATP + H2O = carbamoyl phosphate + L-glutamate + 2 ADP + phosphate + 2 H(+). It catalyses the reaction hydrogencarbonate + NH4(+) + 2 ATP = carbamoyl phosphate + 2 ADP + phosphate + 2 H(+). It functions in the pathway amino-acid biosynthesis; L-arginine biosynthesis; carbamoyl phosphate from bicarbonate: step 1/1. Its pathway is pyrimidine metabolism; UMP biosynthesis via de novo pathway; (S)-dihydroorotate from bicarbonate: step 1/3. Large subunit of the glutamine-dependent carbamoyl phosphate synthetase (CPSase). CPSase catalyzes the formation of carbamoyl phosphate from the ammonia moiety of glutamine, carbonate, and phosphate donated by ATP, constituting the first step of 2 biosynthetic pathways, one leading to arginine and/or urea and the other to pyrimidine nucleotides. The large subunit (synthetase) binds the substrates ammonia (free or transferred from glutamine from the small subunit), hydrogencarbonate and ATP and carries out an ATP-coupled ligase reaction, activating hydrogencarbonate by forming carboxy phosphate which reacts with ammonia to form carbamoyl phosphate. In Methanocaldococcus jannaschii (strain ATCC 43067 / DSM 2661 / JAL-1 / JCM 10045 / NBRC 100440) (Methanococcus jannaschii), this protein is Carbamoyl phosphate synthase large chain, N-terminal section (carB1).